The chain runs to 340 residues: Heat-inducible transcription repressor HrcA (340 aa).

The protein belongs to the HrcA family.

Functionally, negative regulator of class I heat shock genes (grpE-dnaK-dnaJ and groELS operons). Prevents heat-shock induction of these operons. The sequence is that of Heat-inducible transcription repressor HrcA from Mycoplasma mycoides subsp. mycoides SC (strain CCUG 32753 / NCTC 10114 / PG1).